The primary structure comprises 335 residues: Anthranilate phosphoribosyltransferase (335 aa).

Residues glycine 79, 82–83 (GD), serine 87, 89–92 (NIST), 107–115 (KHGNRSITS), and serine 119 contribute to the 5-phospho-alpha-D-ribose 1-diphosphate site. An anthranilate-binding site is contributed by glycine 79. A Mg(2+)-binding site is contributed by serine 91. Asparagine 110 is an anthranilate binding site. Arginine 165 provides a ligand contact to anthranilate. Aspartate 224 and glutamate 225 together coordinate Mg(2+).

It belongs to the anthranilate phosphoribosyltransferase family. Homodimer. It depends on Mg(2+) as a cofactor.

It catalyses the reaction N-(5-phospho-beta-D-ribosyl)anthranilate + diphosphate = 5-phospho-alpha-D-ribose 1-diphosphate + anthranilate. It participates in amino-acid biosynthesis; L-tryptophan biosynthesis; L-tryptophan from chorismate: step 2/5. Functionally, catalyzes the transfer of the phosphoribosyl group of 5-phosphorylribose-1-pyrophosphate (PRPP) to anthranilate to yield N-(5'-phosphoribosyl)-anthranilate (PRA). This is Anthranilate phosphoribosyltransferase from Lactococcus lactis subsp. cremoris (strain MG1363).